Consider the following 476-residue polypeptide: Glycogen synthase (476 aa).

K15 is a binding site for ADP-alpha-D-glucose.

The protein belongs to the glycosyltransferase 1 family. Bacterial/plant glycogen synthase subfamily.

It carries out the reaction [(1-&gt;4)-alpha-D-glucosyl](n) + ADP-alpha-D-glucose = [(1-&gt;4)-alpha-D-glucosyl](n+1) + ADP + H(+). It functions in the pathway glycan biosynthesis; glycogen biosynthesis. Synthesizes alpha-1,4-glucan chains using ADP-glucose. This chain is Glycogen synthase, found in Marinomonas sp. (strain MWYL1).